A 492-amino-acid chain; its full sequence is Histone-lysine N-methyltransferase ASHH1 (492 aa).

Residues 36–87 enclose the AWS domain; the sequence is EDISICECKFDFGDPDSACGERCLNVITNTECTPGYCPCGVYCKNQKFQKCE. An SET domain is found at 84–206; the sequence is QKCEYAKTKL…PRTELAYDYN (123 aa). Residues 213–229 enclose the Post-SET domain; that stretch reads AKVRCLCGAVACSGFLG. Residues 259-340 form a disordered region; sequence SAEDELTSEP…NSQEDSSPKT (82 aa). The span at 266–275 shows a compositional bias: polar residues; the sequence is SEPSKNGESN. Positions 277 to 290 are enriched in basic and acidic residues; the sequence is NEEKEKDISTENHL. Polar residues predominate over residues 291-306; that stretch reads ESTALNIQQQSDSTPT. Basic and acidic residues predominate over residues 317–326; it reads VKTETSEDMK. Residues 328–339 are compositionally biased toward polar residues; sequence LSQNSQEDSSPK.

This sequence belongs to the class V-like SAM-binding methyltransferase superfamily. Histone-lysine methyltransferase family. SET2 subfamily.

Its subcellular location is the nucleus. It is found in the chromosome. The protein resides in the centromere. It catalyses the reaction L-lysyl(4)-[histone H3] + 3 S-adenosyl-L-methionine = N(6),N(6),N(6)-trimethyl-L-lysyl(4)-[histone H3] + 3 S-adenosyl-L-homocysteine + 3 H(+). Histone methyltransferase involved in regulation of flowering time. Required for the expression of the SOC1/AGL20 gene. Required for histone H3 trimethylation on 'Lys-4' (H3K4me3) at the SOC1 locus. Prevents trimethylation on 'Lys-27' (H3K27me3) at the same locus. The polypeptide is Histone-lysine N-methyltransferase ASHH1 (ASHH1) (Arabidopsis thaliana (Mouse-ear cress)).